The chain runs to 572 residues: Probable terpene synthase 11 (572 aa).

The Mg(2+) site is built by Asp317, Asp321, and Glu469. The short motif at 317-321 (DDIFD) is the DDXXD motif element.

This sequence belongs to the terpene synthase family. It depends on Mg(2+) as a cofactor.

Its function is as follows. Probable sesquiterpene synthase. This Ricinus communis (Castor bean) protein is Probable terpene synthase 11 (TPS11).